The chain runs to 443 residues: Xaa-Pro dipeptidase (443 aa).

5 residues coordinate Mn(2+): Asp246, Asp257, His339, Glu384, and Glu423.

It belongs to the peptidase M24B family. Bacterial-type prolidase subfamily. The cofactor is Mn(2+).

The enzyme catalyses Xaa-L-Pro dipeptide + H2O = an L-alpha-amino acid + L-proline. Functionally, splits dipeptides with a prolyl residue in the C-terminal position. In Shigella boydii serotype 18 (strain CDC 3083-94 / BS512), this protein is Xaa-Pro dipeptidase.